The primary structure comprises 81 residues: uncharacterized protein (81 aa).

This is an uncharacterized protein from Bacillus anthracis.